A 266-amino-acid polypeptide reads, in one-letter code: Large ribosomal subunit protein uL2c (266 aa).

The interval 1 to 24 is disordered; sequence MAIHLYKTSTPSTRNGTVDSQVKS. The span at 7–24 shows a compositional bias: polar residues; the sequence is KTSTPSTRNGTVDSQVKS.

This sequence belongs to the universal ribosomal protein uL2 family. Part of the 50S ribosomal subunit.

It is found in the plastid. Its subcellular location is the chloroplast. The protein is Large ribosomal subunit protein uL2c (rpl2) of Nicotiana debneyi (Debney's tobacco).